We begin with the raw amino-acid sequence, 20 residues long: Collagenolytic protease 35 kDa 2 (20 aa).

The Peptidase S1 domain occupies I1–D20. Positions I1 to D20 are disordered.

This sequence belongs to the peptidase S1 family.

The catalysed reaction is Hydrolysis of proteins, with broad specificity for peptide bonds. Native collagen is cleaved about 75% of the length of the molecule from the N-terminus. Low activity on small molecule substrates of both trypsin and chymotrypsin.. This enzyme is a serine protease capable of degrading the native triple helix of collagen. The sequence is that of Collagenolytic protease 35 kDa 2 from Chionoecetes opilio (Atlantic snow crab).